A 560-amino-acid polypeptide reads, in one-letter code: Vanillyl-alcohol oxidase (560 aa).

The 206-residue stretch at 67-272 (DYFLASAIVA…TKIGIWLMPN (206 aa)) folds into the FAD-binding PCMH-type domain. Y108 is an active-site residue. The residue at position 422 (H422) is a Tele-8alpha-FAD histidine. Residues Y503 and R504 contribute to the active site.

The protein to bacterial flavocytochrome p-cresol methyl hydroxylase. Homooctamer (tetramer of tightly interacting dimers). FAD serves as cofactor.

The protein resides in the peroxisome. The protein localises to the cytoplasm. It carries out the reaction 4-hydroxy-3-methoxy-benzenemethanol + O2 = vanillin + H2O2. Competitively inhibited by cinnamyl and coniferyl alcohols and by isoeugenol. In terms of biological role, catalyzes the conversion of vanillin alcohol to vanillin, and also the conversion of a wide range of phenolic compounds bearing side chains of variable size at the para position of the aromatic ring. Crucial for the degradation of the secondary metabolites derived from the degradation of the lignin. Catalyzes besides the oxidation of 4-hydroxybenzyl alcohols, the oxidative deamination of 4-hydroxybenzylamines, the oxidative demethylation of 4-(methoxy-methyl)phenols and the oxidative hydration of 4-allylphenols. Most active with 4-allylphenols. This Penicillium simplicissimum protein is Vanillyl-alcohol oxidase (VAOA).